The chain runs to 203 residues: RNA annealing protein YRA2 (203 aa).

Methionine 1 is subject to N-acetylmethionine. 2 disordered regions span residues methionine 1–proline 60 and glutamine 137–glycine 203. Residues asparagine 11–histidine 20 show a composition bias toward polar residues. Residues serine 47–proline 60 are compositionally biased toward basic and acidic residues. Positions lysine 64–proline 138 constitute an RRM domain. 2 stretches are compositionally biased toward basic residues: residues glutamine 139–glutamine 153 and proline 163–glycine 180.

Belongs to the YRA1 family. Associates with mRNPs. Interacts with YRA1.

It is found in the nucleus. Its function is as follows. Involved in export of poly(A) mRNAs from the nucleus. Recruited to the coding sequences as well as poly-A sites of active genes. The protein is RNA annealing protein YRA2 (YRA2) of Saccharomyces cerevisiae (strain Lalvin EC1118 / Prise de mousse) (Baker's yeast).